Consider the following 156-residue polypeptide: Small ribosomal subunit protein uS7c (156 aa).

It belongs to the universal ribosomal protein uS7 family. In terms of assembly, part of the 30S ribosomal subunit.

The protein resides in the plastid. In terms of biological role, one of the primary rRNA binding proteins, it binds directly to 16S rRNA where it nucleates assembly of the head domain of the 30S subunit. The protein is Small ribosomal subunit protein uS7c (rps7) of Prototheca wickerhamii.